A 197-amino-acid chain; its full sequence is Guanylate kinase (197 aa).

The region spanning 10–187 is the Guanylate kinase-like domain; it reads GSLFIVSAPA…AYQVLRSILI (178 aa). ATP is bound at residue 17–24; that stretch reads APAGTGKT.

This sequence belongs to the guanylate kinase family.

The protein localises to the cytoplasm. The enzyme catalyses GMP + ATP = GDP + ADP. Its function is as follows. Essential for recycling GMP and indirectly, cGMP. In Protochlamydia amoebophila (strain UWE25), this protein is Guanylate kinase.